The sequence spans 290 residues: ATP synthase subunit a (290 aa).

The next 6 helical transmembrane spans lie at 44–64 (AFHV…ILLF), 104–124 (VIAP…AIDL), 161–181 (LSVF…GGFI), 194–214 (ILVQ…TLVA), 233–253 (VFIL…GMGV), and 260–280 (AVFH…LTIV).

This sequence belongs to the ATPase A chain family. As to quaternary structure, F-type ATPases have 2 components, CF(1) - the catalytic core - and CF(0) - the membrane proton channel. CF(1) has five subunits: alpha(3), beta(3), gamma(1), delta(1), epsilon(1). CF(0) has three main subunits: a(1), b(2) and c(9-12). The alpha and beta chains form an alternating ring which encloses part of the gamma chain. CF(1) is attached to CF(0) by a central stalk formed by the gamma and epsilon chains, while a peripheral stalk is formed by the delta and b chains.

The protein resides in the cell inner membrane. In terms of biological role, key component of the proton channel; it plays a direct role in the translocation of protons across the membrane. This is ATP synthase subunit a from Pseudomonas fluorescens (strain ATCC BAA-477 / NRRL B-23932 / Pf-5).